A 1431-amino-acid chain; its full sequence is Trophinin (1431 aa).

Disordered stretches follow at residues 1–24 (MDRR…PGSL), 341–365 (SRAR…QGAQ), and 401–433 (PTTR…PWGR). Positions 405 to 415 (TRGKRNRKSKH) are enriched in basic residues. One can recognise an MAGE domain in the interval 444 to 642 (LQERANKLVK…KDWAVQYREA (199 aa)). A run of 2 repeats spans residues 751 to 760 (FSGGPGITFG) and 769 to 778 (FSNTASISFG). Positions 751–1430 (FSGGPGITFG…ASLGACGFSY (680 aa)) are 62 X 10 AA approximate tandem repeats. A 3; approximate repeat occupies 779–786 (GTLSTSSS). Repeat copies occupy residues 787–796 (FSSAASISFG) and 805–814 (FSSEASISFG). The stretch at 823 to 833 (FSGGVSSSFSG) is one 6; approximate repeat. Copy 7 of the repeat occupies 841 to 850 (FSGGASSGFG). The 8; approximate repeat unit spans residues 859 to 870 (FSGVLSTSTSFG). The stretch at 879 to 890 (FSSALSTSTGFG) is one 9; approximate repeat. Tandem repeats lie at residues 901 to 910 (GSPSSSGSFG), 911 to 920 (GTLSTSICFG), 921 to 930 (GSPCTSTGFG), 931 to 940 (GTLSTSVSFG), and 941 to 950 (GSSSTSANFG). One copy of the 15; approximate repeat lies at 951 to 960 (GTLSTSICFD). Repeat copies occupy residues 961–970 (GSPSTGAGFG), 971–980 (GALNTSASFG), 981–990 (SVLNTSTGFG), 991–1000 (GAMSTSADFG), 1001–1010 (GTLSTSVCFG), and 1011–1020 (GSPGTSVSFG). Residues 1021–1030 (SALNTNAGYG) form a 22; approximate repeat. 4 consecutive repeat copies span residues 1031 to 1040 (GAVSTNTDFG), 1041 to 1050 (GTLSTSVCFG), 1051 to 1060 (GSPSTSAGFG), and 1061 to 1070 (GALNTNASFG). The 27; approximate repeat unit spans residues 1071–1080 (CAVSTSASFS). The stretch at 1081–1090 (GAVSTSACFS) is one 28; approximate repeat. 8 tandem repeats follow at residues 1091–1100 (GAPITNPGFG), 1101–1110 (GAFSTSAGFG), 1111–1120 (GALSTAADFG), 1121–1130 (GTPSNSIGFG), 1131–1140 (AAPSTSVSFG), 1141–1150 (GAHGTSLCFG), 1151–1160 (GAPSTSLCFG), and 1161–1170 (SASNTNLCFG). The 37; approximate repeat unit spans residues 1171–1180 (GPPSTSACFS). Residues 1181–1190 (GATSPSFCDG) form a 38; approximate repeat. Tandem repeats lie at residues 1191–1200 (PSTSTGFSFG), 1201–1210 (NGLSTNAGFG), and 1211–1220 (GGLNTSAGFG). Residues 1221–1230 (GGLGTSAGFS) form a 42; approximate repeat. Residues 1231-1240 (GGLSTSSGFD) form a 43; approximate repeat. Tandem repeats lie at residues 1241–1250 (GGLGTSAGFG) and 1251–1260 (GGPGTSTGFG). The 46; approximate repeat unit spans residues 1261-1270 (GGLGTSAGFS). 3 repeat units span residues 1271-1280 (GGLGTSAGFG), 1281-1290 (GGLVTSDGFG), and 1291-1300 (GGLGTNASFG). A 50; approximate repeat occupies 1301-1310 (STLGTSAGFS). Residues 1311–1320 (GGLSTSDGFG) form repeat 51. The stretch at 1321–1330 (SRPNASFDRG) is one 52; approximate repeat. The stretch at 1331 to 1340 (LSTIIGFGSG) is one 53; approximate repeat. The 54; approximate repeat unit spans residues 1341–1350 (SNTSTGFTGE). Residues 1342–1363 (NTSTGFTGEPSTSTGFSSGPSS) show a composition bias toward low complexity. Residues 1342-1365 (NTSTGFTGEPSTSTGFSSGPSSIV) are disordered. The 55; approximate repeat unit spans residues 1351–1360 (PSTSTGFSSG). One copy of the 56; approximate repeat lies at 1361-1370 (PSSIVGFSGG). A 57; approximate repeat occupies 1371 to 1380 (PSTGVGFCSG). Residues 1381-1390 (PSTSGFSGGP) form a 58; approximate repeat. One copy of the 59; approximate repeat lies at 1391–1400 (STGAGFGGGP). A 60; approximate repeat occupies 1401–1410 (NTGAGFGGGP). A 61; approximate repeat occupies 1411–1420 (STSAGFGSGA). Residues 1421–1430 (ASLGACGFSY) form a 62; approximate repeat.

In terms of assembly, directly binds bystin, and indirectly tastin. Strong expression at implantation sites. Found in the placenta from the sixth week of pregnancy. Was localized in the cytoplasm of the syncytiotrophoblast in the chorionic villi and in endometrial decidual cells at the uteroplacental interface. After week 10, the level decreased and then disappeared from placental villi. Also found in macrophages.

Its function is as follows. Could be involved with bystin and tastin in a cell adhesion molecule complex that mediates an initial attachment of the blastocyst to uterine epithelial cells at the time of the embryo implantation. Directly responsible for homophilic cell adhesion. The sequence is that of Trophinin (TRO) from Homo sapiens (Human).